We begin with the raw amino-acid sequence, 664 residues long: MASQFCLPLAPRLSPLKPLKSHFTDFQVGICVAIQRSDKRIHLAVVTEINRENSWVTVEWVEKGVKKGKKIELETVLLLNPALASTEHQRSRRPLRPVSVIPATAIGDQRTATKWIAMIPHRNETPSGDSQTLVIPSNPCLMKRKKSPCLREIEKLQKQREKRRRLQLEIRARRALDINTGNPNFETMRMIEEYRRHLDSSKMSRLEPPEDHRICVCVRKRPLNERETTMKDLDIITIPSHNVVMVHESKQKVDLTRYLENQTFCFDHAFDDTASNELVYQFTARPLVESIFRKGMATCFAYGQTGSGKTHTMGGAFSGKAQECSKGIYALVAQDVFLLLRTPAYEKLELKVYGTFFEIYGGKVYDLLNWKKKLQVLEDGNQQIQVVGLQEQEVGCVEEVLNLVELGNSCRTSGQTSVNAHSSRSHAVFQLILKCGGKLHGKFSLVDLAGNERGADTAKATRKRQLEGAEINKSLLALKECIRALGKNKSHTPFRASKLTQVLRDSFIGQNSYTCMIATISPGMTSCENTLNTLRYANRVKELALEARPYPPTDHEMPLTLENGNTNSEKSLQKDDIIQIPTVQKEEEKESDELTSTKEPAASWSRSGPWWEAIQETAEGVNCDVDFCIAQSLSILEQKIGVLTEIQKKLQLLRDDLQKKSQAE.

Position 125 is a phosphothreonine; by PLK1 (Thr125). Residues 149–177 (CLREIEKLQKQREKRRRLQLEIRARRALD) adopt a coiled-coil conformation. Position 204 is a phosphoserine; by PLK1 (Ser204). Residues 213–543 (RICVCVRKRP…LRYANRVKEL (331 aa)) enclose the Kinesin motor domain. 303-310 (GQTGSGKT) is an ATP binding site. Residues 583-607 (VQKEEEKESDELTSTKEPAASWSRS) are disordered. The stretch at 642 to 663 (VLTEIQKKLQLLRDDLQKKSQA) forms a coiled coil.

It belongs to the TRAFAC class myosin-kinesin ATPase superfamily. Kinesin family. MCAK/KIF2 subfamily. Phosphorylation at Thr-125 by PLK1 is required for activity in the correction of kinetochore-microtubules attachment errors, while phosphorylation at Ser-204 also by PLK1 is required for the kinetochore localization and activity in prometaphase.

The protein localises to the cytoplasm. It is found in the cytoskeleton. The protein resides in the microtubule organizing center. Its subcellular location is the centrosome. It localises to the spindle. The protein localises to the chromosome. It is found in the centromere. The protein resides in the kinetochore. In terms of biological role, plus end-directed microtubule-dependent motor required for spindle assembly and chromosome movement. Has microtubule depolymerization activity. Plays a role in chromosome congression. The chain is Kinesin-like protein KIF2B from Rattus norvegicus (Rat).